We begin with the raw amino-acid sequence, 426 residues long: MIDVKLLRKNPEIFYDAIKKRNMDTEIIDKILEVDKEWRELVAKVNELKAKRNEFSKLVAKAKVEKDNEKASKLIEESKKIGEEIKKIEEQEKKLEEEMQNLALNIPNIPAEDVPFGKDESENIEIRRWGEPRKFDFEPKAHWDLGPELSMMDFERGAKLSGSRFTVLYSYLARLERALIQFMLDVHTKEHGYTEVWVPQLVKRDAMLWTGKLPKFEEDAYCIEKDDMFLIPTAEVPLVALHAQEILSEKDLPIKYTAYSACYRREAGSYGKDVRGMIRQHQFDKVELVWITTPERSFEDLERLTQDAERILQLLELPYRVVSLCSGDLGFVSAKTYDIEVWLPSYNSYKEISSCSNTTDFQTRRSNIRYRGSDNKLHYAHALNGSGLAVGRTLVAIVENYQNEDGSITVPKVLVPYMGVEKIEVK.

233–235 (TAE) is a binding site for L-serine. 264-266 (RRE) lines the ATP pocket. E287 contributes to the L-serine binding site. 351–354 (EISS) is an ATP binding site. S386 is an L-serine binding site.

This sequence belongs to the class-II aminoacyl-tRNA synthetase family. Type-1 seryl-tRNA synthetase subfamily. Homodimer. The tRNA molecule binds across the dimer.

Its subcellular location is the cytoplasm. It carries out the reaction tRNA(Ser) + L-serine + ATP = L-seryl-tRNA(Ser) + AMP + diphosphate + H(+). The catalysed reaction is tRNA(Sec) + L-serine + ATP = L-seryl-tRNA(Sec) + AMP + diphosphate + H(+). It participates in aminoacyl-tRNA biosynthesis; selenocysteinyl-tRNA(Sec) biosynthesis; L-seryl-tRNA(Sec) from L-serine and tRNA(Sec): step 1/1. Functionally, catalyzes the attachment of serine to tRNA(Ser). Is also able to aminoacylate tRNA(Sec) with serine, to form the misacylated tRNA L-seryl-tRNA(Sec), which will be further converted into selenocysteinyl-tRNA(Sec). The chain is Serine--tRNA ligase from Thermosipho africanus (strain TCF52B).